The chain runs to 451 residues: UDP-glycosyltransferase 76C4 (451 aa).

Residues Ser273, 332–334 (APQ), 349–357 (HNGWNSTVE), and 371–374 (RWDQ) each bind UDP-alpha-D-glucose.

It belongs to the UDP-glycosyltransferase family.

This is UDP-glycosyltransferase 76C4 (UGT76C4) from Arabidopsis thaliana (Mouse-ear cress).